A 417-amino-acid polypeptide reads, in one-letter code: MIDLRLLRENPDIVRASQRARGEDPALVDALLAADTARRSAVSAADNLRAEQKAASKLVGKASPDERPALLQRAKDLAEQVKAAEAAQAEAEQAFTAAHMAISNVIFEGVPAGGEDDFVVLDTVGEPRAIENPKDHLELGESLGLIDMERGAKVSGSRFYFLTGAGALLQLGLLQLATQVAVQNGFTLMIPPVLVRPEVMRGTGFLGAHADEVYRLEADDMYLVGTSEVPLAGYHADEILDLSAGPRRYAGWSSCFRREAGSYGKDTRGIIRVHQFDKVEGFIYCKPEDAEAEHQRLLGWQREMLAAIEVPYRVIDVAAGDLGSSAARKYDCEAWVPTQQTYRELTSTSNCTTFQARRLSTRYRDDNGKPQIAATLNGTLATTRWLVAILENHQQPDGSVRVPAALVPYVRTEVLEP.

L-serine is bound at residue 226-228 (TSE). ATP contacts are provided by residues 257–259 (RRE) and valine 273. Position 280 (glutamate 280) interacts with L-serine. 344-347 (ELTS) provides a ligand contact to ATP. Threonine 379 is an L-serine binding site.

This sequence belongs to the class-II aminoacyl-tRNA synthetase family. Type-1 seryl-tRNA synthetase subfamily. Homodimer. The tRNA molecule binds across the dimer.

It localises to the cytoplasm. It catalyses the reaction tRNA(Ser) + L-serine + ATP = L-seryl-tRNA(Ser) + AMP + diphosphate + H(+). The catalysed reaction is tRNA(Sec) + L-serine + ATP = L-seryl-tRNA(Sec) + AMP + diphosphate + H(+). It functions in the pathway aminoacyl-tRNA biosynthesis; selenocysteinyl-tRNA(Sec) biosynthesis; L-seryl-tRNA(Sec) from L-serine and tRNA(Sec): step 1/1. Functionally, catalyzes the attachment of serine to tRNA(Ser). Is also able to aminoacylate tRNA(Sec) with serine, to form the misacylated tRNA L-seryl-tRNA(Sec), which will be further converted into selenocysteinyl-tRNA(Sec). The chain is Serine--tRNA ligase from Mycolicibacterium smegmatis (strain ATCC 700084 / mc(2)155) (Mycobacterium smegmatis).